Here is a 317-residue protein sequence, read N- to C-terminus: Ribosomal protein L11 methyltransferase (317 aa).

Residues Thr158, Gly179, Asp201, and Asn244 each coordinate S-adenosyl-L-methionine.

The protein belongs to the methyltransferase superfamily. PrmA family.

It localises to the cytoplasm. It catalyses the reaction L-lysyl-[protein] + 3 S-adenosyl-L-methionine = N(6),N(6),N(6)-trimethyl-L-lysyl-[protein] + 3 S-adenosyl-L-homocysteine + 3 H(+). Methylates ribosomal protein L11. The sequence is that of Ribosomal protein L11 methyltransferase from Lactococcus lactis subsp. cremoris (strain MG1363).